A 316-amino-acid polypeptide reads, in one-letter code: CD276 antigen (316 aa).

The N-terminal stretch at Met-1–Ala-28 is a signal peptide. The Ig-like V-type domain maps to Val-29 to Ala-139. The Extracellular portion of the chain corresponds to Val-29–Ala-248. Asn-104, Asn-189, and Asn-215 each carry an N-linked (GlcNAc...) asparagine glycan. Residues Pro-145–Thr-238 enclose the Ig-like C2-type domain. Cysteines 165 and 220 form a disulfide. The helical transmembrane segment at Leu-249 to Val-269 threads the bilayer. Residues Cys-270–Ala-316 lie on the Cytoplasmic side of the membrane. Positions Glu-281 to Gly-292 are enriched in acidic residues. Residues Glu-281–Ala-316 are disordered.

It belongs to the immunoglobulin superfamily. BTN/MOG family. Interacts with TREML2 and this interaction enhances T-cell activation.

It is found in the membrane. Modulates T-cell-mediated immune responses and the development of acute and chronic transplant rejection. May play a positive regulatory role in bone formation and has a dual role in the bone-immune interface. Induces antitumor immunity as it activates both acquired and innate immunity leading to natural killer cell and CD8 T-cell dependent killing of tumor cells. In Rattus norvegicus (Rat), this protein is CD276 antigen (Cd276).